Consider the following 296-residue polypeptide: 5,10-methylenetetrahydrofolate reductase (296 aa).

Glu28 functions as the Proton donor/acceptor in the catalytic mechanism. An NADH-binding site is contributed by Thr59. FAD is bound by residues Tyr60, Ala62, His88, Arg118, Gly119, Asp120, Ala132, Tyr152, His156, Ala159, Asp165, Asn168, Arg171, and Lys172. A (6S)-5-methyl-5,6,7,8-tetrahydrofolate-binding site is contributed by Asp120. An NADH-binding site is contributed by Gln183. Positions 183, 219, and 279 each coordinate (6S)-5-methyl-5,6,7,8-tetrahydrofolate.

Belongs to the methylenetetrahydrofolate reductase family. Homotetramer. Requires FAD as cofactor.

The catalysed reaction is (6S)-5-methyl-5,6,7,8-tetrahydrofolate + NAD(+) = (6R)-5,10-methylene-5,6,7,8-tetrahydrofolate + NADH + H(+). It functions in the pathway one-carbon metabolism; tetrahydrofolate interconversion. It participates in amino-acid biosynthesis; L-methionine biosynthesis via de novo pathway. Its function is as follows. Catalyzes the NADH-dependent reduction of 5,10-methylenetetrahydrofolate to 5-methyltetrahydrofolate. Is required to provide the methyl group necessary for methionine synthetase to convert homocysteine to methionine; the methyl group is given by 5-methyltetrahydrofolate. Can also use NADPH as the reductant, but much less effectively than NADH. The chain is 5,10-methylenetetrahydrofolate reductase from Escherichia coli (strain K12).